The following is a 115-amino-acid chain: Large ribosomal subunit protein bL19 (115 aa).

It belongs to the bacterial ribosomal protein bL19 family.

Its function is as follows. This protein is located at the 30S-50S ribosomal subunit interface and may play a role in the structure and function of the aminoacyl-tRNA binding site. This Citrobacter koseri (strain ATCC BAA-895 / CDC 4225-83 / SGSC4696) protein is Large ribosomal subunit protein bL19.